Consider the following 328-residue polypeptide: GMP reductase (328 aa).

Residue C176 is the Thioimidate intermediate of the active site. I205–I228 is an NADP(+) binding site.

This sequence belongs to the IMPDH/GMPR family. GuaC type 2 subfamily.

It carries out the reaction IMP + NH4(+) + NADP(+) = GMP + NADPH + 2 H(+). In terms of biological role, catalyzes the irreversible NADPH-dependent deamination of GMP to IMP. It functions in the conversion of nucleobase, nucleoside and nucleotide derivatives of G to A nucleotides, and in maintaining the intracellular balance of A and G nucleotides. This is GMP reductase from Streptococcus pneumoniae (strain JJA).